A 696-amino-acid polypeptide reads, in one-letter code: Spermatogenesis-associated protein 21 (696 aa).

Disordered regions lie at residues 1 to 301 and 329 to 386; these read MDNR…AAGT and LKAR…SVPT. Over residues 67 to 86 the composition is skewed to basic and acidic residues; that stretch reads KGPRYRDTFKEGPSELRTQE. The segment covering 96-116 has biased composition (polar residues); that stretch reads KQSSWVPQEGSQELQAGQDQS. The segment covering 195–209 has biased composition (basic and acidic residues); the sequence is GDKRPKEADVPHIRP. Polar residues predominate over residues 223–235; that stretch reads DSSQEAMPPTSTV. Over residues 275–287 the composition is skewed to basic and acidic residues; that stretch reads EVRDIGERREPDR. Composition is skewed to low complexity over residues 288–297 and 339–366; these read VQQQPQKPVV and SPRT…SGPS. The stretch at 424 to 451 forms a coiled coil; sequence EPEEQSLQKLYQNREKSEEQLTLKQEEA. Residues 481–516 form the EF-hand domain; the sequence is VTPAQVEDALMSADVNGDGHVDFKDFLAVMTDTRRF. Ca(2+) contacts are provided by Asp-494, Asn-496, Asp-498, His-500, and Asp-505. The tract at residues 646-696 is disordered; sequence KPTNHYVQDQCTTPGLAPDIRSPFFQSRSQGNREHNSDSRKWPSSVPSRTH. Residues 676–686 show a composition bias toward basic and acidic residues; that stretch reads GNREHNSDSRK.

In terms of biological role, involved in the differentiation of haploid spermatids. This chain is Spermatogenesis-associated protein 21 (SPATA21), found in Macaca fascicularis (Crab-eating macaque).